Reading from the N-terminus, the 320-residue chain is Malate dehydrogenase (320 aa).

NAD(+) is bound by residues 10-15 and aspartate 34; that span reads GSGMIG. Positions 83 and 89 each coordinate substrate. NAD(+)-binding positions include asparagine 96 and 119–121; that span reads ITN. Residues asparagine 121 and arginine 152 each contribute to the substrate site. Histidine 176 serves as the catalytic Proton acceptor.

It belongs to the LDH/MDH superfamily. MDH type 3 family.

The enzyme catalyses (S)-malate + NAD(+) = oxaloacetate + NADH + H(+). Its function is as follows. Catalyzes the reversible oxidation of malate to oxaloacetate. The protein is Malate dehydrogenase of Rhizobium meliloti (strain 1021) (Ensifer meliloti).